The sequence spans 224 residues: 2,5-diamino-6-ribosylamino-4(3H)-pyrimidinone 5'-phosphate reductase (224 aa).

NADP(+) contacts are provided by residues threonine 57, aspartate 61, 82 to 85, valine 131, and 153 to 156; these read STAN and GASI.

Belongs to the HTP reductase family. Homodimer.

It catalyses the reaction 2,5-diamino-6-(1-D-ribitylamino)pyrimidin-4(3H)-one 5'-phosphate + NADP(+) = 2,5-diamino-6-(1-D-ribosylamino)pyrimidin-4(3H)-one 5'-phosphate + NADPH + H(+). The enzyme catalyses 2,5-diamino-6-(1-D-ribitylamino)pyrimidin-4(3H)-one 5'-phosphate + NAD(+) = 2,5-diamino-6-(1-D-ribosylamino)pyrimidin-4(3H)-one 5'-phosphate + NADH + H(+). Its pathway is cofactor biosynthesis; riboflavin biosynthesis. Its function is as follows. Catalyzes an early step in riboflavin biosynthesis, the NADPH-dependent reduction of the ribose side chain of 2,5-diamino-6-ribosylamino-4(3H)-pyrimidinone 5'-phosphate, yielding 2,5-diamino-6-ribitylamino-4(3H)-pyrimidinone 5'-phosphate. The protein is 2,5-diamino-6-ribosylamino-4(3H)-pyrimidinone 5'-phosphate reductase (ribD2) of Aquifex aeolicus (strain VF5).